We begin with the raw amino-acid sequence, 224 residues long: 7-cyano-7-deazaguanine synthase (224 aa).

ATP is bound at residue 11-21 (FSGGQDSTTCL). Positions 190, 199, 202, and 205 each coordinate Zn(2+).

Belongs to the QueC family. It depends on Zn(2+) as a cofactor.

The catalysed reaction is 7-carboxy-7-deazaguanine + NH4(+) + ATP = 7-cyano-7-deazaguanine + ADP + phosphate + H2O + H(+). Its pathway is purine metabolism; 7-cyano-7-deazaguanine biosynthesis. In terms of biological role, catalyzes the ATP-dependent conversion of 7-carboxy-7-deazaguanine (CDG) to 7-cyano-7-deazaguanine (preQ(0)). This chain is 7-cyano-7-deazaguanine synthase, found in Parabacteroides distasonis (strain ATCC 8503 / DSM 20701 / CIP 104284 / JCM 5825 / NCTC 11152).